A 587-amino-acid polypeptide reads, in one-letter code: Ankyrin repeat and SOCS box protein 14 (587 aa).

ANK repeat units follow at residues 81-110 (NGWL…PSTW), 116-145 (NGET…NPNA), 149-178 (EGNS…DVNL), 182-211 (NERT…YPDA), 215-244 (YGFT…DVHS), 248-277 (DSSS…DANI), 281-310 (SGHL…IAAI), 313-342 (SGIS…DVNF), 355-384 (QRKS…LPNQ), 385-414 (DPVN…NVNY), and 416-449 (CRVN…DTER). The SOCS box domain maps to 521–576 (WPEIHFILANPRSLQHLCRLKIRKCMGRLRLRCPVFMSFLPLPNLLKAYVLYKEYD).

The protein belongs to the ankyrin SOCS box (ASB) family. In terms of assembly, interacts with MAPRE2; this interaction promotes MAPRE2 degradation.

Its pathway is protein modification; protein ubiquitination. May be a substrate-recognition component of a SCF-like ECS (Elongin-Cullin-SOCS-box protein) E3 ubiquitin-protein ligase complex which mediates the ubiquitination and subsequent proteasomal degradation of target proteins. Plays a role in the inhibition of cardiomyocyte nuclear proliferation by mediating the ubiquitination and degradation of MAPRE2. The protein is Ankyrin repeat and SOCS box protein 14 (Asb14) of Mus musculus (Mouse).